Here is a 144-residue protein sequence, read N- to C-terminus: Large ribosomal subunit protein uL13 (144 aa).

The protein belongs to the universal ribosomal protein uL13 family. As to quaternary structure, part of the 50S ribosomal subunit.

This protein is one of the early assembly proteins of the 50S ribosomal subunit, although it is not seen to bind rRNA by itself. It is important during the early stages of 50S assembly. The sequence is that of Large ribosomal subunit protein uL13 from Nitratidesulfovibrio vulgaris (strain ATCC 29579 / DSM 644 / CCUG 34227 / NCIMB 8303 / VKM B-1760 / Hildenborough) (Desulfovibrio vulgaris).